Here is a 33-residue protein sequence, read N- to C-terminus: Zinc metalloproteinase-disintegrin-like moojenin (33 aa).

Positions 8–33 (PPVCGNELLEVGEECDCGTPENCQNE) constitute a Disintegrin domain. Positions 10, 13, 15, 17, 20, and 23 each coordinate Ca(2+). Intrachain disulfides connect C11/C30 and C24/C30.

Belongs to the venom metalloproteinase (M12B) family. P-III subfamily. P-IIIb sub-subfamily. In terms of assembly, monomer. Zn(2+) serves as cofactor. Post-translationally, the N-terminus (from the N-terminal region of the metalloproteinase domain) is blocked. As to expression, expressed by the venom gland.

The protein localises to the secreted. With respect to regulation, the fibrinogenolytic and coagulant activities of the moojenin were abolished by preincubation with EDTA, 1,10-phenanthroline and beta-mercaptoethanol. Metalloproteinase moojenin: snake venom metalloproteinase that cleaves both alpha- and beta-chains of fibrinogen, but not the gamma-chain. Shows a coagulant activity on bovine plasma about 3.1 fold lower than crude venom. Renders the blood incoagulable when intraperitoneally administered into mice. Induces necrosis in liver and muscle, but does not cause histological alterations in mouse lungs, kidney or heart. This Bothrops moojeni (Lance-headed viper) protein is Zinc metalloproteinase-disintegrin-like moojenin.